Here is a 209-residue protein sequence, read N- to C-terminus: MTLSQQLSTLISKTQLVVSQEQIDLLIQYVELLNKWNKAYNLTSVRDPSEMLVKHIMDSLMVGEVLIGKNFIDVGTGPGLPGIPLAILYPERNFVLLDSLGKRITFLRQVVFQLKLSNVTPVKARVEEYQGEEPFDGVLSRAFSSLNDMVSWCKHLITTEQGRFFALKGQYPQDEISQLPENITLVDSHEIIVPDLVGERHVIVLKKLH.

S-adenosyl-L-methionine contacts are provided by residues Gly-75, Leu-80, 126 to 127 (VE), and Arg-141.

This sequence belongs to the methyltransferase superfamily. RNA methyltransferase RsmG family.

The protein localises to the cytoplasm. It carries out the reaction guanosine(527) in 16S rRNA + S-adenosyl-L-methionine = N(7)-methylguanosine(527) in 16S rRNA + S-adenosyl-L-homocysteine. Functionally, specifically methylates the N7 position of guanine in position 527 of 16S rRNA. This chain is Ribosomal RNA small subunit methyltransferase G, found in Colwellia psychrerythraea (strain 34H / ATCC BAA-681) (Vibrio psychroerythus).